We begin with the raw amino-acid sequence, 184 residues long: Endoribonuclease YbeY (184 aa).

The Zn(2+) site is built by histidine 118, histidine 122, and histidine 128.

The protein belongs to the endoribonuclease YbeY family. Zn(2+) serves as cofactor.

Its subcellular location is the cytoplasm. Single strand-specific metallo-endoribonuclease involved in late-stage 70S ribosome quality control and in maturation of the 3' terminus of the 16S rRNA. The chain is Endoribonuclease YbeY from Nocardia farcinica (strain IFM 10152).